Consider the following 73-residue polypeptide: MIMRMTLTLFVLVVMTAASASGDALTEAKRIPYCGQTGAECYSWCIKQDLSKDWCCDFVKTIARLPPAHICSQ.

The signal sequence occupies residues 1–22; sequence MIMRMTLTLFVLVVMTAASASG. The propeptide occupies 23 to 28; sequence DALTEA. Intrachain disulfides connect cysteine 34-cysteine 41, cysteine 45-cysteine 55, and cysteine 56-cysteine 71.

It belongs to the conotoxin K superfamily. In terms of tissue distribution, expressed by the venom duct.

The protein localises to the secreted. Functionally, neurotoxin that induces excitatory symptoms in mice following intracranial administration. No symptoms are observed after intraperitoneal and intravenous (tail vein) injections. The polypeptide is Conotoxin im23b (Conus imperialis (Imperial cone)).